The primary structure comprises 279 residues: Tryptophan 2,3-dioxygenase (279 aa).

Substrate-binding positions include 48 to 52 (FIVIH), tyrosine 110, and arginine 114. Histidine 237 contacts heme. Residue threonine 251 coordinates substrate.

Belongs to the tryptophan 2,3-dioxygenase family. In terms of assembly, homotetramer. Heme is required as a cofactor.

The enzyme catalyses L-tryptophan + O2 = N-formyl-L-kynurenine. Its pathway is amino-acid degradation; L-tryptophan degradation via kynurenine pathway; L-kynurenine from L-tryptophan: step 1/2. Its function is as follows. Heme-dependent dioxygenase that catalyzes the oxidative cleavage of the L-tryptophan (L-Trp) pyrrole ring and converts L-tryptophan to N-formyl-L-kynurenine. Catalyzes the oxidative cleavage of the indole moiety. In Bacillus anthracis, this protein is Tryptophan 2,3-dioxygenase.